A 406-amino-acid chain; its full sequence is Peptidase T (406 aa).

His78 provides a ligand contact to Zn(2+). The active site involves Asp80. Asp139 is a Zn(2+) binding site. Glu173 (proton acceptor) is an active-site residue. Positions 174, 196, and 378 each coordinate Zn(2+).

Belongs to the peptidase M20B family. Requires Zn(2+) as cofactor.

The protein resides in the cytoplasm. It catalyses the reaction Release of the N-terminal residue from a tripeptide.. Cleaves the N-terminal amino acid of tripeptides. The protein is Peptidase T of Clostridium perfringens (strain ATCC 13124 / DSM 756 / JCM 1290 / NCIMB 6125 / NCTC 8237 / Type A).